Here is a 304-residue protein sequence, read N- to C-terminus: ATP phosphoribosyltransferase (304 aa).

Belongs to the ATP phosphoribosyltransferase family. Long subfamily. The cofactor is Mg(2+).

It localises to the cytoplasm. It carries out the reaction 1-(5-phospho-beta-D-ribosyl)-ATP + diphosphate = 5-phospho-alpha-D-ribose 1-diphosphate + ATP. The protein operates within amino-acid biosynthesis; L-histidine biosynthesis; L-histidine from 5-phospho-alpha-D-ribose 1-diphosphate: step 1/9. Feedback inhibited by histidine. In terms of biological role, catalyzes the condensation of ATP and 5-phosphoribose 1-diphosphate to form N'-(5'-phosphoribosyl)-ATP (PR-ATP). Has a crucial role in the pathway because the rate of histidine biosynthesis seems to be controlled primarily by regulation of HisG enzymatic activity. The chain is ATP phosphoribosyltransferase from Xanthomonas euvesicatoria pv. vesicatoria (strain 85-10) (Xanthomonas campestris pv. vesicatoria).